Here is a 133-residue protein sequence, read N- to C-terminus: Ribosome-binding factor A (133 aa).

Belongs to the RbfA family. In terms of assembly, monomer. Binds 30S ribosomal subunits, but not 50S ribosomal subunits or 70S ribosomes.

The protein localises to the cytoplasm. Functionally, one of several proteins that assist in the late maturation steps of the functional core of the 30S ribosomal subunit. Associates with free 30S ribosomal subunits (but not with 30S subunits that are part of 70S ribosomes or polysomes). Required for efficient processing of 16S rRNA. May interact with the 5'-terminal helix region of 16S rRNA. The sequence is that of Ribosome-binding factor A from Citrobacter koseri (strain ATCC BAA-895 / CDC 4225-83 / SGSC4696).